The following is a 415-amino-acid chain: Serine hydroxymethyltransferase (415 aa).

Residues leucine 117 and 121–123 (GHL) contribute to the (6S)-5,6,7,8-tetrahydrofolate site. Lysine 226 carries the N6-(pyridoxal phosphate)lysine modification.

This sequence belongs to the SHMT family. In terms of assembly, homodimer. Requires pyridoxal 5'-phosphate as cofactor.

It localises to the cytoplasm. The catalysed reaction is (6R)-5,10-methylene-5,6,7,8-tetrahydrofolate + glycine + H2O = (6S)-5,6,7,8-tetrahydrofolate + L-serine. Its pathway is one-carbon metabolism; tetrahydrofolate interconversion. It functions in the pathway amino-acid biosynthesis; glycine biosynthesis; glycine from L-serine: step 1/1. In terms of biological role, catalyzes the reversible interconversion of serine and glycine with tetrahydrofolate (THF) serving as the one-carbon carrier. This reaction serves as the major source of one-carbon groups required for the biosynthesis of purines, thymidylate, methionine, and other important biomolecules. Also exhibits THF-independent aldolase activity toward beta-hydroxyamino acids, producing glycine and aldehydes, via a retro-aldol mechanism. The protein is Serine hydroxymethyltransferase of Dehalococcoides mccartyi (strain ATCC BAA-2100 / JCM 16839 / KCTC 5957 / BAV1).